We begin with the raw amino-acid sequence, 156 residues long: ATP synthase subunit b (156 aa).

A helical transmembrane segment spans residues 12 to 32 (IAFAIFVLFCMKFIWPALMGA).

Belongs to the ATPase B chain family. F-type ATPases have 2 components, F(1) - the catalytic core - and F(0) - the membrane proton channel. F(1) has five subunits: alpha(3), beta(3), gamma(1), delta(1), epsilon(1). F(0) has three main subunits: a(1), b(2) and c(10-14). The alpha and beta chains form an alternating ring which encloses part of the gamma chain. F(1) is attached to F(0) by a central stalk formed by the gamma and epsilon chains, while a peripheral stalk is formed by the delta and b chains.

The protein localises to the cell inner membrane. In terms of biological role, f(1)F(0) ATP synthase produces ATP from ADP in the presence of a proton or sodium gradient. F-type ATPases consist of two structural domains, F(1) containing the extramembraneous catalytic core and F(0) containing the membrane proton channel, linked together by a central stalk and a peripheral stalk. During catalysis, ATP synthesis in the catalytic domain of F(1) is coupled via a rotary mechanism of the central stalk subunits to proton translocation. Component of the F(0) channel, it forms part of the peripheral stalk, linking F(1) to F(0). In Psychrobacter sp. (strain PRwf-1), this protein is ATP synthase subunit b.